Here is a 289-residue protein sequence, read N- to C-terminus: ATP phosphoribosyltransferase (289 aa).

Belongs to the ATP phosphoribosyltransferase family. Long subfamily. The cofactor is Mg(2+).

The protein resides in the cytoplasm. The enzyme catalyses 1-(5-phospho-beta-D-ribosyl)-ATP + diphosphate = 5-phospho-alpha-D-ribose 1-diphosphate + ATP. The protein operates within amino-acid biosynthesis; L-histidine biosynthesis; L-histidine from 5-phospho-alpha-D-ribose 1-diphosphate: step 1/9. With respect to regulation, feedback inhibited by histidine. In terms of biological role, catalyzes the condensation of ATP and 5-phosphoribose 1-diphosphate to form N'-(5'-phosphoribosyl)-ATP (PR-ATP). Has a crucial role in the pathway because the rate of histidine biosynthesis seems to be controlled primarily by regulation of HisG enzymatic activity. The polypeptide is ATP phosphoribosyltransferase (Koribacter versatilis (strain Ellin345)).